The following is a 316-amino-acid chain: MPITIGRGFLKSEMFSQSAISQRSFFTLLWEKIKDFFCDTQRSTADQYIKELCDVASPPDAQRLFDLFCKLYELSSPSCRGNFHFQHYKDAECQYTNLCIKDGEDIPLCIMIRQDHYYYEIMNRTVLCVDTQSAHLKRYSDINIKASTYVCEPLCCLFPERLQLSLSGGITFSVDLKNIEETLIAMAEKGNLCDWKEQERKAAISSRINLGIAQAGVTAIDDAIKNKIAAKVIENTNLKNAAFEPNYAQSSVTQIVYSCLFKNEILMNMLEESSSHGLLCLNELTEYVALQVHNSLFSEDLSSLVETTKNEAHHQS.

It belongs to the Sif family.

The protein resides in the secreted. The protein localises to the host cytoplasm. In terms of biological role, effector proteins function to alter host cell physiology and promote bacterial survival in host tissues. This is Secreted effector protein SifB (sifB) from Salmonella typhimurium (strain LT2 / SGSC1412 / ATCC 700720).